We begin with the raw amino-acid sequence, 365 residues long: Medium chain reductase pydE (365 aa).

An Enoyl reductase (ER) domain is found at 21 to 362 (KLIDSLPVPP…SKRARGKVLI (342 aa)). NADP(+) is bound by residues 185–188 (SGSV), Y226, 274–275 (IG), and 354–355 (KR).

It belongs to the zinc-containing alcohol dehydrogenase family. As to quaternary structure, monomer.

Its pathway is mycotoxin biosynthesis. Its function is as follows. Medium chain reductase; part of the gene cluster that mediates the biosynthesis of pyrrocidines, fungal natural products containing a macrocyclic para-cyclophane connected to a decahydrofluorene ring system that show potent antibiotic activities toward Gram-negative bacteria. Within the pathway, pydE functions synergistically with pydB, pydX and pydZ to form the cyclophane. The pathway begins with the PKS-NRPS pydA which, with the help of the trans-enoyl reductase pydC, synthesizes the polyketide-tyrosyl acyl thioester product which can be reductively off-loaded by the terminal reductase (R) domain in pydA. The alpha/beta hydrolase pydG is then required to catalyze the subsequent Knoevenagel condensation that affords the 3-pyrrolin-2-one ring, whereas the four proteins pydB, pydE, pydX and pydZ then function synergistically to form the cyclophane. PydB and the membrane-bound pydX and pydZ are lipid-binding proteins that can sequester and mold the pdyG product into the inverse S-shape. Binding of the medium chain reductase pydE to the complex would trigger the cascade oxidative cyclization. PydY is involved in the Diels-Alder cycloaddition that forms the decahydrofluorene core. Additional non-enzymatic hydroxylation yields pyrrocidine A2 which can be further reduced into pyrrocidine B by an endogenous reductase. This is Medium chain reductase pydE from Acremonium sp.